A 492-amino-acid chain; its full sequence is Beta-Ala-His dipeptidase (492 aa).

H107 lines the Zn(2+) pocket. D109 is an active-site residue. D140 serves as a coordination point for Zn(2+). E174 serves as the catalytic Proton acceptor. Residue E175 coordinates Zn(2+). S194 bears the Phosphoserine mark. Positions 203 and 453 each coordinate Zn(2+).

It belongs to the peptidase M20A family. As to quaternary structure, homodimer. It depends on Zn(2+) as a cofactor. Detected exclusively in kidney.

The protein localises to the secreted. The enzyme catalyses Preferential hydrolysis of the beta-Ala-|-His dipeptide (carnosine), and also anserine, Xaa-|-His dipeptides and other dipeptides including homocarnosine.. The catalysed reaction is carnosine + H2O = beta-alanine + L-histidine. It catalyses the reaction anserine + H2O = N(pros)-methyl-L-histidine + beta-alanine. It carries out the reaction L-alanyl-L-histidine + H2O = L-histidine + L-alanine. The enzyme catalyses glycyl-L-histidine + H2O = L-histidine + glycine. The catalysed reaction is L-homocarnosine + H2O = 4-aminobutanoate + L-histidine. Its function is as follows. Catalyzes the peptide bond hydrolysis in Xaa-His dipeptides, displaying the highest activity toward carnosine (beta-alanyl-L-histidine) and anserine (beta-alanyl-3-methyl-histidine). This chain is Beta-Ala-His dipeptidase (Cndp1), found in Rattus norvegicus (Rat).